The chain runs to 325 residues: Lactonase drp35 (325 aa).

Positions 46, 108, 110, 128, 131, 133, 136, 183, 234, and 235 each coordinate Ca(2+). Residue Asp234 is the Proton donor of the active site.

Belongs to the SMP-30/CGR1 family. Ca(2+) serves as cofactor.

The protein localises to the cytoplasm. Its function is as follows. Exhibits lactonase activity. Acts in cells with perturbed membrane integrity and is possibly related to the membrane homeostasis. The sequence is that of Lactonase drp35 (drp35) from Staphylococcus haemolyticus (strain JCSC1435).